The primary structure comprises 236 residues: 2,3,4,5-tetrahydropyridine-2,6-dicarboxylate N-acetyltransferase (236 aa).

This sequence belongs to the transferase hexapeptide repeat family. DapH subfamily.

It catalyses the reaction (S)-2,3,4,5-tetrahydrodipicolinate + acetyl-CoA + H2O = L-2-acetamido-6-oxoheptanedioate + CoA. The protein operates within amino-acid biosynthesis; L-lysine biosynthesis via DAP pathway; LL-2,6-diaminopimelate from (S)-tetrahydrodipicolinate (acetylase route): step 1/3. Functionally, catalyzes the transfer of an acetyl group from acetyl-CoA to tetrahydrodipicolinate. The protein is 2,3,4,5-tetrahydropyridine-2,6-dicarboxylate N-acetyltransferase of Geobacillus kaustophilus (strain HTA426).